Consider the following 167-residue polypeptide: RNA pyrophosphohydrolase (167 aa).

A Nudix hydrolase domain is found at 8-159 (PYRTCVGVML…KRPVYERVVK (152 aa)). The short motif at 47–68 (GGVDPGEDTWAAAKRELYEETS) is the Nudix box element.

Belongs to the Nudix hydrolase family. RppH subfamily. It depends on a divalent metal cation as a cofactor.

In terms of biological role, accelerates the degradation of transcripts by removing pyrophosphate from the 5'-end of triphosphorylated RNA, leading to a more labile monophosphorylated state that can stimulate subsequent ribonuclease cleavage. The polypeptide is RNA pyrophosphohydrolase (Bradyrhizobium diazoefficiens (strain JCM 10833 / BCRC 13528 / IAM 13628 / NBRC 14792 / USDA 110)).